We begin with the raw amino-acid sequence, 516 residues long: Lysophosphatidylcholine acyltransferase 2B (516 aa).

Asn28 is a glycosylation site (N-linked (GlcNAc...) asparagine). The next 3 membrane-spanning stretches (helical) occupy residues 44-64, 68-88, and 102-122; these read THLS…LVPV, CIVF…INLP, and LIKS…GFLV. The HXXXXD motif motif lies at 142-147; the sequence is HSTFFD. EF-hand domains follow at residues 387-422 and 424-459; these read PISE…LCNP and NTEK…AFGV. Ca(2+) is bound by residues Asp400, Asn402, Asp404, Thr406, Glu411, Asp437, Asp439, Asp441, Tyr443, and Glu448.

The protein belongs to the 1-acyl-sn-glycerol-3-phosphate acyltransferase family.

The protein resides in the membrane. It participates in lipid metabolism; phospholipid metabolism. In terms of biological role, probable acetyltransferase. The chain is Lysophosphatidylcholine acyltransferase 2B (Lpcat2b) from Mus musculus (Mouse).